The sequence spans 150 residues: 3-dehydroquinate dehydratase (150 aa).

Tyrosine 22 functions as the Proton acceptor in the catalytic mechanism. Substrate is bound by residues asparagine 73, histidine 79, and aspartate 86. Histidine 99 acts as the Proton donor in catalysis. Residues 100–101 and arginine 110 each bind substrate; that span reads LS.

Belongs to the type-II 3-dehydroquinase family. Homododecamer.

It catalyses the reaction 3-dehydroquinate = 3-dehydroshikimate + H2O. It functions in the pathway metabolic intermediate biosynthesis; chorismate biosynthesis; chorismate from D-erythrose 4-phosphate and phosphoenolpyruvate: step 3/7. In terms of biological role, catalyzes a trans-dehydration via an enolate intermediate. This Dinoroseobacter shibae (strain DSM 16493 / NCIMB 14021 / DFL 12) protein is 3-dehydroquinate dehydratase.